A 236-amino-acid chain; its full sequence is Auxin-responsive protein IAA13 (236 aa).

Disordered regions lie at residues 1–24, 52–93, and 105–130; these read MAGA…GGAA, EAAA…WPPV, and SVKS…GSNS. Positions 12–16 match the EAR-like (transcriptional repression) motif; it reads LRLGL. Over residues 52–61 the composition is skewed to low complexity; it reads EAAAGKAEAP. A compositionally biased stretch (basic and acidic residues) spans 62–81; sequence AAEKAKRPAEAAAADAEKPP. A compositionally biased stretch (low complexity) spans 117 to 130; the sequence is QQQQPAANASGSNS. One can recognise a PB1 domain in the interval 131–218; that stretch reads SAFVKVSMDG…SCKRLRIMKG (88 aa).

The protein belongs to the Aux/IAA family. As to quaternary structure, homodimers and heterodimers.

Its subcellular location is the nucleus. Aux/IAA proteins are short-lived transcriptional factors that function as repressors of early auxin response genes at low auxin concentrations. The protein is Auxin-responsive protein IAA13 (IAA13) of Oryza sativa subsp. japonica (Rice).